Reading from the N-terminus, the 555-residue chain is Perforin-1 (555 aa).

The first 21 residues, 1 to 21, serve as a signal peptide directing secretion; that stretch reads MAARLLLLGILLLLLPLPVPA. 3 disulfide bridges follow: Cys-23-Cys-76, Cys-31-Cys-73, and Cys-102-Cys-176. The 349-residue stretch at 27 to 375 folds into the MACPF domain; the sequence is ARSECKRSHK…QYLTDRARWR (349 aa). A beta stranded transmembrane segment spans residues 129–149; it reads WKVGLDVTPKPTSNVHVSVAG. N-linked (GlcNAc...) asparagine glycosylation is present at Asn-205. Intrachain disulfides connect Cys-242-Cys-408, Cys-377-Cys-393, Cys-381-Cys-395, and Cys-397-Cys-407. A beta stranded transmembrane segment spans residues 257–279; sequence CLTVEAQVNIGIHGSISAEAKAC. One can recognise an EGF-like domain in the interval 376 to 408; the sequence is DCSRPCPPGRQKSPRDPCQCVCHGSAVTTQDCC. The C2 domain occupies 397 to 519; the sequence is CHGSAVTTQD…CNLNHGHLKF (123 aa). Ca(2+) is bound by residues Gly-429, Asp-430, Thr-433, Ala-434, Asp-436, Asp-484, Asp-486, Asp-490, Asp-491, and Asp-492. 2 disulfides stabilise this stretch: Cys-497/Cys-510 and Cys-525/Cys-534. An N-linked (GlcNAc...) asparagine glycan is attached at Asn-549.

This sequence belongs to the complement C6/C7/C8/C9 family. In terms of assembly, monomer, as soluble protein. Homooligomer; homooligomerizes to form a pore-forming ring. Ca(2+) is required as a cofactor. Post-translationally, N-glycosylated.

The protein localises to the cytolytic granule. The protein resides in the secreted. Its subcellular location is the cell membrane. It is found in the endosome lumen. Its function is as follows. Pore-forming protein that plays a key role in granzyme-mediated programmed cell death, and in defense against virus-infected or neoplastic cells. Plays an important role in killing other cells that are recognized as non-self by the immune system, e.g. in transplant rejection or some forms of autoimmune disease. Can insert into the membrane of target cells in its calcium-bound form, oligomerize and form large pores. Promotes cytolysis and apoptosis of target cells by mediating the passage and uptake of cytotoxic granzymes. Facilitates the delivery of cationic cargo protein, while anionic or neural proteins are not delivered efficiently. Perforin pores allow the release of mature caspase-7 (CASP7) into the extracellular milieu. The sequence is that of Perforin-1 (PRF1) from Homo sapiens (Human).